Here is a 141-residue protein sequence, read N- to C-terminus: Hemoglobin D subunit alpha (141 aa).

Positions 1–141 (MLTEDDKQLI…VSAVLAEKYR (141 aa)) constitute a Globin domain. His-58 provides a ligand contact to O2. Residue His-87 coordinates heme b.

The protein belongs to the globin family. Tetramer of two alpha chains and two beta chains. In terms of tissue distribution, red blood cells.

Its function is as follows. Involved in oxygen transport from the lung to the various peripheral tissues. This chain is Hemoglobin D subunit alpha, found in Aldabrachelys gigantea (Aldabra giant tortoise).